Here is a 301-residue protein sequence, read N- to C-terminus: Acetyl-coenzyme A carboxylase carboxyl transferase subunit beta (301 aa).

The CoA carboxyltransferase N-terminal domain occupies 25–294 (LWIKCPETGE…SAANDVTRGA (270 aa)).

It belongs to the AccD/PCCB family. As to quaternary structure, acetyl-CoA carboxylase is a heterohexamer composed of biotin carboxyl carrier protein (AccB), biotin carboxylase (AccC) and two subunits each of ACCase subunit alpha (AccA) and ACCase subunit beta (AccD).

The protein localises to the cytoplasm. The enzyme catalyses N(6)-carboxybiotinyl-L-lysyl-[protein] + acetyl-CoA = N(6)-biotinyl-L-lysyl-[protein] + malonyl-CoA. It functions in the pathway lipid metabolism; malonyl-CoA biosynthesis; malonyl-CoA from acetyl-CoA: step 1/1. In terms of biological role, component of the acetyl coenzyme A carboxylase (ACC) complex. Biotin carboxylase (BC) catalyzes the carboxylation of biotin on its carrier protein (BCCP) and then the CO(2) group is transferred by the transcarboxylase to acetyl-CoA to form malonyl-CoA. The sequence is that of Acetyl-coenzyme A carboxylase carboxyl transferase subunit beta from Rhizobium etli (strain ATCC 51251 / DSM 11541 / JCM 21823 / NBRC 15573 / CFN 42).